The primary structure comprises 308 residues: Elongation factor Ts (308 aa).

Residues 80–83 (TDFV) form an involved in Mg(2+) ion dislocation from EF-Tu region.

It belongs to the EF-Ts family.

It localises to the cytoplasm. Functionally, associates with the EF-Tu.GDP complex and induces the exchange of GDP to GTP. It remains bound to the aminoacyl-tRNA.EF-Tu.GTP complex up to the GTP hydrolysis stage on the ribosome. In Verminephrobacter eiseniae (strain EF01-2), this protein is Elongation factor Ts.